A 474-amino-acid chain; its full sequence is Cryptochrome DASH (474 aa).

The Photolyase/cryptochrome alpha/beta domain occupies 2 to 136 (DTAVVWFRDD…ALRQRWTHTL (135 aa)). A compositionally biased stretch (basic and acidic residues) spans 161–171 (EAAATVRDPRS). The segment at 161 to 202 (EAAATVRDPRSAPETVPTPDGLTPGPVPTVESLGVSEPPTDD) is disordered.

The protein belongs to the DNA photolyase class-1 family. The cofactor is FAD. (6R)-5,10-methylene-5,6,7,8-tetrahydrofolate serves as cofactor.

Functionally, may have a photoreceptor function. Binds DNA; probably functions as a transcriptional repressor. The protein is Cryptochrome DASH (cry) of Natronomonas pharaonis (strain ATCC 35678 / DSM 2160 / CIP 103997 / JCM 8858 / NBRC 14720 / NCIMB 2260 / Gabara) (Halobacterium pharaonis).